The primary structure comprises 124 residues: Colorectal cancer-associated protein 1 (124 aa).

The helical transmembrane segment at Leu-77–Ala-97 threads the bilayer.

Expressed in gastrointestinal and immune tissue, as well as prostate, testis and ovary. Expressed in lamina propria and eosinophils but not in epithelial cells. Expression is greater in benign adjacent tissues than in colon tumors.

The protein localises to the membrane. This is Colorectal cancer-associated protein 1 (COLCA1) from Homo sapiens (Human).